A 317-amino-acid polypeptide reads, in one-letter code: L-lactate dehydrogenase (317 aa).

V16, D37, and Y69 together coordinate NAD(+). Substrate is bound by residues Q86, R92, and N124–D127. Residues A122–N124 and S147 contribute to the NAD(+) site. D152–R155 is a substrate binding site. H179 functions as the Proton acceptor in the catalytic mechanism. Y223 carries the phosphotyrosine modification. T232 provides a ligand contact to substrate.

This sequence belongs to the LDH/MDH superfamily. LDH family. Homotetramer.

It is found in the cytoplasm. The enzyme catalyses (S)-lactate + NAD(+) = pyruvate + NADH + H(+). The protein operates within fermentation; pyruvate fermentation to lactate; (S)-lactate from pyruvate: step 1/1. Functionally, catalyzes the conversion of lactate to pyruvate. In Mycoplasma capricolum subsp. capricolum (strain California kid / ATCC 27343 / NCTC 10154), this protein is L-lactate dehydrogenase.